A 34-amino-acid polypeptide reads, in one-letter code: Photosystem I reaction center subunit XII (34 aa).

The chain crosses the membrane as a helical span at residues 11 to 31 (VAIAFVVALIAGIAALLLSTA).

This sequence belongs to the PsaM family. As to quaternary structure, the G.violaceus PSI reaction center is composed of one copy each of PsaA,B,C,D,E,F,L,M and Z, and forms trimeric complexes.

The protein localises to the cell inner membrane. This Gloeobacter violaceus (strain ATCC 29082 / PCC 7421) protein is Photosystem I reaction center subunit XII.